Here is a 103-residue protein sequence, read N- to C-terminus: Small ribosomal subunit protein uS10 (103 aa).

This sequence belongs to the universal ribosomal protein uS10 family. In terms of assembly, part of the 30S ribosomal subunit.

Its function is as follows. Involved in the binding of tRNA to the ribosomes. The polypeptide is Small ribosomal subunit protein uS10 (Tolumonas auensis (strain DSM 9187 / NBRC 110442 / TA 4)).